The primary structure comprises 695 residues: Putative pentatricopeptide repeat-containing protein At1g77010, mitochondrial (695 aa).

The N-terminal 64 residues, 1 to 64, are a transit peptide targeting the mitochondrion; the sequence is MILKYNSSYR…KGFLSSIVIV (64 aa). PPR repeat units lie at residues 61-91, 92-122, 123-157, 159-184, 186-220, 221-251, 252-282, 283-313, 317-351, 352-382, 383-417, 418-448, 449-483, 484-514, 515-549, 550-585, and 586-616; these read IVIVANHLLQMYSRSGKMGIARNLFDEMPDR, NYFSWNTMIEGYMNSGEKGTSLRFFDMMPER, DGYSWNVVVSGFAKAGELSVARRLFNAMPEKDVVT, NSLLHGYILNGYAEEALRLFKELNFS, DAITLTTVLKACAELEALKCGKQIHAQILIGGVEC, DSKMNSSLVNVYAKCGDLRMASYMLEQIREP, DDHSLSALISGYANCGRVNESRGLFDRKSNR, CVILWNSMISGYIANNMKMEALVLFNEMRNE, DSRTLAAVINACIGLGFLETGKQMHCHACKFGLID, DIVVASTLLDMYSKCGSPMEACKLFSEVESY, DTILLNSMIKVYFSCGRIDDAKRVFERIENKSLIS, WNSMTNGFSQNGCTVETLEYFHQMHKLDLPT, DEVSLSSVISACASISSLELGEQVFARATIVGLDS, DQVVSSSLIDLYCKCGFVEHGRRVFDTMVKS, DEVPWNSMISGYATNGQGFEAIDLFKKMSVAGIRP, TQITFMVVLTACNYCGLVEEGRKLFESMKVDHGFVP, and DKEHFSCMVDLLARAGYVEEAINLVEEMPFD. The tract at residues 621-695 is type E motif; degenerate; it reads MWSSILRGCV…KNPGSSWTDC (75 aa).

The protein belongs to the PPR family. PCMP-E subfamily.

It localises to the mitochondrion. The chain is Putative pentatricopeptide repeat-containing protein At1g77010, mitochondrial (PCMP-E5) from Arabidopsis thaliana (Mouse-ear cress).